We begin with the raw amino-acid sequence, 188 residues long: Small ribosomal subunit protein bS18c (188 aa).

Low complexity predominate over residues 1 to 19; it reads MNNQSFNNFSQVNSNSSFF. The segment at 1 to 79 is disordered; the sequence is MNNQSFNNFS…TSNKRKVLSV (79 aa). A compositionally biased stretch (polar residues) spans 25–71; that stretch reads NLQNTNLEMTNGTNPPSSFSKQTPQKRQSFGTNTNFSKGNSSRGSTS.

This sequence belongs to the bacterial ribosomal protein bS18 family. As to quaternary structure, part of the 30S ribosomal subunit.

It is found in the plastid. It localises to the chloroplast. This is Small ribosomal subunit protein bS18c from Tetradesmus obliquus (Green alga).